The chain runs to 356 residues: Phospho-N-acetylmuramoyl-pentapeptide-transferase (356 aa).

A run of 10 helical transmembrane segments spans residues 27-47 (ATLM…INML), 73-93 (TMGG…WMDL), 97-117 (FVWA…LDDL), 138-158 (FLVA…WLYV), 165-185 (AIPL…GAGN), 195-215 (GLAI…AYLA), 232-252 (AGEL…FLWF), 258-278 (AVFM…AIAV), 284-304 (IVLA…IIQV), and 333-353 (KVVI…LATL).

The protein belongs to the glycosyltransferase 4 family. MraY subfamily. The cofactor is Mg(2+).

It is found in the cell inner membrane. The enzyme catalyses UDP-N-acetyl-alpha-D-muramoyl-L-alanyl-gamma-D-glutamyl-meso-2,6-diaminopimeloyl-D-alanyl-D-alanine + di-trans,octa-cis-undecaprenyl phosphate = di-trans,octa-cis-undecaprenyl diphospho-N-acetyl-alpha-D-muramoyl-L-alanyl-D-glutamyl-meso-2,6-diaminopimeloyl-D-alanyl-D-alanine + UMP. It participates in cell wall biogenesis; peptidoglycan biosynthesis. Its function is as follows. Catalyzes the initial step of the lipid cycle reactions in the biosynthesis of the cell wall peptidoglycan: transfers peptidoglycan precursor phospho-MurNAc-pentapeptide from UDP-MurNAc-pentapeptide onto the lipid carrier undecaprenyl phosphate, yielding undecaprenyl-pyrophosphoryl-MurNAc-pentapeptide, known as lipid I. The protein is Phospho-N-acetylmuramoyl-pentapeptide-transferase of Erythrobacter litoralis (strain HTCC2594).